The chain runs to 115 residues: Large ribosomal subunit protein uL18 (115 aa).

This sequence belongs to the universal ribosomal protein uL18 family. In terms of assembly, part of the 50S ribosomal subunit; part of the 5S rRNA/L5/L18/L25 subcomplex. Contacts the 5S and 23S rRNAs.

In terms of biological role, this is one of the proteins that bind and probably mediate the attachment of the 5S RNA into the large ribosomal subunit, where it forms part of the central protuberance. The protein is Large ribosomal subunit protein uL18 of Mycoplasma genitalium (strain ATCC 33530 / DSM 19775 / NCTC 10195 / G37) (Mycoplasmoides genitalium).